The sequence spans 156 residues: Small ribosomal subunit protein uS7 (156 aa).

This sequence belongs to the universal ribosomal protein uS7 family. Part of the 30S ribosomal subunit. Contacts proteins S9 and S11.

Functionally, one of the primary rRNA binding proteins, it binds directly to 16S rRNA where it nucleates assembly of the head domain of the 30S subunit. Is located at the subunit interface close to the decoding center, probably blocks exit of the E-site tRNA. This is Small ribosomal subunit protein uS7 from Parafrankia sp. (strain EAN1pec).